The primary structure comprises 311 residues: Salutaridine reductase (311 aa).

NADP(+) contacts are provided by residues 21–24 (NKGI), Arg44, 70–71 (DV), and Asn98. Tyr129 and Ser180 together coordinate substrate. NADP(+)-binding positions include Tyr236, Lys240, and 267–272 (VKTEMN). Tyr236 (proton acceptor) is an active-site residue. Cysteines 263 and 305 form a disulfide.

The protein belongs to the short-chain dehydrogenases/reductases (SDR) family.

The catalysed reaction is (7S)-salutaridinol + NADP(+) = salutaridine + NADPH + H(+). The protein operates within alkaloid biosynthesis; morphine biosynthesis. With respect to regulation, strong substrate inhibition. Was thought to be due to mutually exclusive productive and non-productive modes of substrate binding in the active site. Alternatively, SALR may undergo significant conformational changes during catalytic turnover. Short-chain dehydrogenases/reductases involved in biosynthesis of morphinan-type benzylisoquinoline and opiate alkaloids natural products. Catalyzes specifically the stereospecific conversion of salutaridine to salutaridinol. The polypeptide is Salutaridine reductase (Papaver somniferum (Opium poppy)).